Here is a 186-residue protein sequence, read N- to C-terminus: Ribosome-recycling factor (186 aa).

A disordered region spans residues 140-163 (LKKAEKDGDIGQDEGRSLSERVQK).

Belongs to the RRF family.

It localises to the cytoplasm. Functionally, responsible for the release of ribosomes from messenger RNA at the termination of protein biosynthesis. May increase the efficiency of translation by recycling ribosomes from one round of translation to another. This Rhizobium rhizogenes (strain K84 / ATCC BAA-868) (Agrobacterium radiobacter) protein is Ribosome-recycling factor.